A 227-amino-acid chain; its full sequence is Uracil-DNA glycosylase (227 aa).

The active-site Proton acceptor is aspartate 65.

Belongs to the uracil-DNA glycosylase (UDG) superfamily. UNG family.

It is found in the cytoplasm. The catalysed reaction is Hydrolyzes single-stranded DNA or mismatched double-stranded DNA and polynucleotides, releasing free uracil.. In terms of biological role, excises uracil residues from the DNA which can arise as a result of misincorporation of dUMP residues by DNA polymerase or due to deamination of cytosine. In Lactobacillus delbrueckii subsp. bulgaricus (strain ATCC BAA-365 / Lb-18), this protein is Uracil-DNA glycosylase.